A 567-amino-acid polypeptide reads, in one-letter code: Proline--tRNA ligase (567 aa).

It belongs to the class-II aminoacyl-tRNA synthetase family. ProS type 1 subfamily. Homodimer.

Its subcellular location is the cytoplasm. It carries out the reaction tRNA(Pro) + L-proline + ATP = L-prolyl-tRNA(Pro) + AMP + diphosphate. Functionally, catalyzes the attachment of proline to tRNA(Pro) in a two-step reaction: proline is first activated by ATP to form Pro-AMP and then transferred to the acceptor end of tRNA(Pro). As ProRS can inadvertently accommodate and process non-cognate amino acids such as alanine and cysteine, to avoid such errors it has two additional distinct editing activities against alanine. One activity is designated as 'pretransfer' editing and involves the tRNA(Pro)-independent hydrolysis of activated Ala-AMP. The other activity is designated 'posttransfer' editing and involves deacylation of mischarged Ala-tRNA(Pro). The misacylated Cys-tRNA(Pro) is not edited by ProRS. The protein is Proline--tRNA ligase of Staphylococcus aureus (strain Mu3 / ATCC 700698).